The sequence spans 316 residues: Transaldolase (316 aa).

Residue Lys-127 is the Schiff-base intermediate with substrate of the active site.

It belongs to the transaldolase family. Type 2 subfamily.

The protein resides in the cytoplasm. It carries out the reaction D-sedoheptulose 7-phosphate + D-glyceraldehyde 3-phosphate = D-erythrose 4-phosphate + beta-D-fructose 6-phosphate. The protein operates within carbohydrate degradation; pentose phosphate pathway; D-glyceraldehyde 3-phosphate and beta-D-fructose 6-phosphate from D-ribose 5-phosphate and D-xylulose 5-phosphate (non-oxidative stage): step 2/3. In terms of biological role, transaldolase is important for the balance of metabolites in the pentose-phosphate pathway. The polypeptide is Transaldolase (tal) (Helicobacter pylori (strain ATCC 700392 / 26695) (Campylobacter pylori)).